A 168-amino-acid polypeptide reads, in one-letter code: ADP-ribosylation factor-like protein 2-binding protein (168 aa).

Belongs to the ARL2BP family.

Its subcellular location is the cytoplasm. It localises to the mitochondrion intermembrane space. It is found in the cytoskeleton. The protein localises to the microtubule organizing center. The protein resides in the centrosome. Its subcellular location is the nucleus. It localises to the spindle. It is found in the cilium basal body. Functionally, plays a role as an effector of the ADP-ribosylation factor-like protein 2, ARL2. The chain is ADP-ribosylation factor-like protein 2-binding protein (arl2bp) from Danio rerio (Zebrafish).